A 308-amino-acid chain; its full sequence is MEGLTVGLFGHVEGVGKELGKKGTSTDITLYNYKQGDKAVCYVEPTRYPDRINPLIYEINMMDYALVFIDEITGELGETLLALDMFGINNGAFVVGEYVDLDMLKNIISQTSMKDFEILERDFINIREKMINLNIERDYNGFVKIPIDHYFTVRSVGTVILGKVESGTVRVHDNLRVYPTDKMAMVRSIQIHDNDFKEAKAGNRVGLALKGITTDELDRGMILSNGELKVAKEIEININWNPFMQKTVKEGENYQIIVGLQSVSCVVEEVNKNKIKLSLQKEIAYDVGDKLCLIDGSAKIRILGVGKL.

This is an uncharacterized protein from Methanocaldococcus jannaschii (strain ATCC 43067 / DSM 2661 / JAL-1 / JCM 10045 / NBRC 100440) (Methanococcus jannaschii).